A 106-amino-acid chain; its full sequence is U1-lycotoxin-Ls1b (106 aa).

The N-terminal stretch at 1 to 19 (MKVLVVVALLVTLISYSSS) is a signal peptide. Residues 20–40 (EGIDDPEADELLSLMANEQTR) constitute a propeptide that is removed on maturation. 4 disulfide bridges follow: cysteine 43–cysteine 58, cysteine 50–cysteine 67, cysteine 57–cysteine 85, and cysteine 69–cysteine 83.

This sequence belongs to the neurotoxin 19 (CSTX) family. 04 (U1-Lctx) subfamily. In terms of tissue distribution, expressed by the venom gland.

Its subcellular location is the secreted. In Lycosa singoriensis (Wolf spider), this protein is U1-lycotoxin-Ls1b.